A 172-amino-acid polypeptide reads, in one-letter code: MORN repeat-containing protein 5 (172 aa).

MORN repeat units lie at residues 8–30 (YIGE…TETK), 31–53 (YIGE…NGSR), and 54–75 (FDAV…DGLQ).

Its subcellular location is the cell projection. It is found in the cilium. It localises to the flagellum. The chain is MORN repeat-containing protein 5 (MORN5) from Bos taurus (Bovine).